The primary structure comprises 78 residues: Polcalcin Phl p 7 (78 aa).

EF-hand domains follow at residues 1 to 35 (MADD…LGST) and 35 to 70 (TSAD…NPGL). Ca(2+) is bound by residues Asp-13, Asn-15, Asp-17, Lys-19, Glu-24, Asp-48, Asp-50, Asp-52, and Glu-59.

Monomer. In terms of tissue distribution, specifically expressed in pollen.

In terms of biological role, may be involved in the regulation of pollen-tube growth. The protein is Polcalcin Phl p 7 of Phleum pratense (Common timothy).